The chain runs to 430 residues: MEF2-activating motif and SAP domain-containing transcriptional regulator (430 aa).

An MEF2-binding motif is present at residues 12 to 28; sequence IIRSKFRSVLQLRIHRR. Disordered regions lie at residues 84–172, 204–239, 280–301, and 330–416; these read CWSL…PLPH, KSML…RFRP, VATT…APAS, and EDQV…DLSD. The span at 87 to 103 shows a compositional bias: basic and acidic residues; it reads LKKESPKTSQHWREPKP. A compositionally biased stretch (pro residues) spans 147 to 170; sequence QPPPRMKPTPLTPSPPGVPSPSPL. Residues 181–215 form the SAP domain; it reads LEELTVSELRQQLRLRGLPVSGTKSMLLERMRGGA. Basic and acidic residues predominate over residues 207–228; that stretch reads LLERMRGGAPPRERPKARREDS. Residues 224 to 430 are transcription activation; the sequence is RREDSAAGAP…RLWDLLEDPW (207 aa). Composition is skewed to low complexity over residues 363–373 and 393–403; these read SSVFSSSLPSP and ALSGGPSLGCG.

In terms of assembly, interacts with MEF2C.

The protein resides in the nucleus. Functionally, transcriptional coactivator. Stimulates the transcriptional activity of MEF2C. Stimulates MYOD1 activity in part via MEF2, resulting in an enhancement of skeletal muscle differentiation. The protein is MEF2-activating motif and SAP domain-containing transcriptional regulator (MAMSTR) of Bos taurus (Bovine).